Here is a 145-residue protein sequence, read N- to C-terminus: D-aminoacyl-tRNA deacylase (145 aa).

A Gly-cisPro motif, important for rejection of L-amino acids motif is present at residues Gly-137 to Pro-138.

The protein belongs to the DTD family. As to quaternary structure, homodimer.

The protein resides in the cytoplasm. It catalyses the reaction glycyl-tRNA(Ala) + H2O = tRNA(Ala) + glycine + H(+). The catalysed reaction is a D-aminoacyl-tRNA + H2O = a tRNA + a D-alpha-amino acid + H(+). Functionally, an aminoacyl-tRNA editing enzyme that deacylates mischarged D-aminoacyl-tRNAs. Also deacylates mischarged glycyl-tRNA(Ala), protecting cells against glycine mischarging by AlaRS. Acts via tRNA-based rather than protein-based catalysis; rejects L-amino acids rather than detecting D-amino acids in the active site. By recycling D-aminoacyl-tRNA to D-amino acids and free tRNA molecules, this enzyme counteracts the toxicity associated with the formation of D-aminoacyl-tRNA entities in vivo and helps enforce protein L-homochirality. This chain is D-aminoacyl-tRNA deacylase, found in Pectobacterium atrosepticum (strain SCRI 1043 / ATCC BAA-672) (Erwinia carotovora subsp. atroseptica).